Reading from the N-terminus, the 432-residue chain is Adenylosuccinate synthetase (432 aa).

GTP is bound by residues 13–19 (GDEGKGK) and 41–43 (GHT). Asp14 serves as the catalytic Proton acceptor. Asp14 and Gly41 together coordinate Mg(2+). IMP-binding positions include 14 to 17 (DEGK), 39 to 42 (NAGH), Thr130, Arg144, Gln225, Thr240, and Arg304. The Proton donor role is filled by His42. 300–306 (ATTGRRR) lines the substrate pocket. GTP contacts are provided by residues Arg306, 332–334 (KLD), and 415–417 (STG).

Belongs to the adenylosuccinate synthetase family. In terms of assembly, homodimer. Mg(2+) is required as a cofactor.

It localises to the cytoplasm. The enzyme catalyses IMP + L-aspartate + GTP = N(6)-(1,2-dicarboxyethyl)-AMP + GDP + phosphate + 2 H(+). It functions in the pathway purine metabolism; AMP biosynthesis via de novo pathway; AMP from IMP: step 1/2. Its function is as follows. Plays an important role in the de novo pathway of purine nucleotide biosynthesis. Catalyzes the first committed step in the biosynthesis of AMP from IMP. In Baumannia cicadellinicola subsp. Homalodisca coagulata, this protein is Adenylosuccinate synthetase.